A 71-amino-acid polypeptide reads, in one-letter code: UPF0346 protein str0441 (71 aa).

The protein belongs to the UPF0346 family.

This is UPF0346 protein str0441 from Streptococcus thermophilus (strain CNRZ 1066).